We begin with the raw amino-acid sequence, 476 residues long: Glutamate--tRNA ligase (476 aa).

The short motif at 8–18 is the 'HIGH' region element; the sequence is PSPTGTLHIGT. Positions 247 to 251 match the 'KMSKS' region motif; it reads KLSKR. Residue Lys250 participates in ATP binding.

The protein belongs to the class-I aminoacyl-tRNA synthetase family. Glutamate--tRNA ligase type 1 subfamily. As to quaternary structure, monomer.

It localises to the cytoplasm. The catalysed reaction is tRNA(Glu) + L-glutamate + ATP = L-glutamyl-tRNA(Glu) + AMP + diphosphate. Catalyzes the attachment of glutamate to tRNA(Glu) in a two-step reaction: glutamate is first activated by ATP to form Glu-AMP and then transferred to the acceptor end of tRNA(Glu). In Synechococcus sp. (strain WH7803), this protein is Glutamate--tRNA ligase.